A 226-amino-acid polypeptide reads, in one-letter code: UPF0758 protein Daro_3142 (226 aa).

An MPN domain is found at 103-226 (SFTSPGKVRD…PLSFAERGLL (124 aa)). Zn(2+) contacts are provided by His-174, His-176, and Asp-187. Positions 174 to 187 (HNHPSGIAEPSRAD) match the JAMM motif motif.

It belongs to the UPF0758 family.

The polypeptide is UPF0758 protein Daro_3142 (Dechloromonas aromatica (strain RCB)).